A 342-amino-acid chain; its full sequence is Heat-inducible transcription repressor HrcA (342 aa).

It belongs to the HrcA family.

Functionally, negative regulator of class I heat shock genes (grpE-dnaK-dnaJ and groELS operons). Prevents heat-shock induction of these operons. This Dechloromonas aromatica (strain RCB) protein is Heat-inducible transcription repressor HrcA.